The chain runs to 219 residues: MAESLRSPRRSLYKLVGSPPWKEAFRQRCLERMRNSRDRLLNRYRQAGSSGPGNSQNSFLVQEVMEEEWNALQSVENCPEDLAQLEELIDMAVLEEIQQELINQEQSIISEYEKSLQFDEKCLSIMLAEWEANPLICPVCTKYNLRITSGVVVCQCGLSIPSHSSELTEQKLRACLEGSINEHSAHCPHTPEFSVTGGTEEKSSLLMSCLACDTWAVIL.

Ser-18 is subject to Phosphoserine. Residue Lys-121 forms a Glycyl lysine isopeptide (Lys-Gly) (interchain with G-Cter in SUMO); in isoform 2 linkage. An RIP-type zinc finger spans residues 137–212 (CPVCTKYNLR…SSLLMSCLAC (76 aa)). The interval 164–180 (SSELTEQKLRACLEGSI) is mediates nuclear export.

As to quaternary structure, interacts with the RPA1 subunit of RPA complex. Post-translationally, sumoylated. Sumoylation is required for localization in the nuclear PML body and transport of RPA complex in PML body. Upon UV irradiation and during S phase, it is desumoylated, releasing RPA complex that is translocated to sites of DNA damage. Sumoylation takes place at different Lys residues. Variant 'Lys-103' adds a sumoylation site and increases total sumoylation levels. In terms of tissue distribution, widely expressed. Expressed in pancreas, kidney, muscle, liver, lung, placenta, brain, heart, leukocytes, colon, intestine, ovary, testis, prostate, thymus and spleen.

It is found in the cytoplasm. Its subcellular location is the nucleus. The protein localises to the PML body. Functionally, mediates the import of RPA complex into the nucleus, possibly via some interaction with importin beta. Isoform 2 is sumoylated and mediates the localization of RPA complex into the PML body of the nucleus, thereby participating in RPA function in DNA metabolism. The protein is RPA-interacting protein (RPAIN) of Homo sapiens (Human).